Consider the following 130-residue polypeptide: Small ribosomal subunit protein uS9 (130 aa).

It belongs to the universal ribosomal protein uS9 family.

The chain is Small ribosomal subunit protein uS9 from Marinobacter nauticus (strain ATCC 700491 / DSM 11845 / VT8) (Marinobacter aquaeolei).